Here is a 358-residue protein sequence, read N- to C-terminus: 3-isopropylmalate dehydrogenase (358 aa).

77–90 (GEKWDSLPRELRPE) contributes to the NAD(+) binding site. Arg97, Arg107, Arg135, and Asp220 together coordinate substrate. Residues Asp220, Asp244, and Asp248 each contribute to the Mg(2+) site. 277–289 (GSAPDIAGQGIAN) is an NAD(+) binding site.

Belongs to the isocitrate and isopropylmalate dehydrogenases family. LeuB type 1 subfamily. Homodimer. Mg(2+) serves as cofactor. The cofactor is Mn(2+).

It is found in the cytoplasm. The catalysed reaction is (2R,3S)-3-isopropylmalate + NAD(+) = 4-methyl-2-oxopentanoate + CO2 + NADH. It functions in the pathway amino-acid biosynthesis; L-leucine biosynthesis; L-leucine from 3-methyl-2-oxobutanoate: step 3/4. Its function is as follows. Catalyzes the oxidation of 3-carboxy-2-hydroxy-4-methylpentanoate (3-isopropylmalate) to 3-carboxy-4-methyl-2-oxopentanoate. The product decarboxylates to 4-methyl-2 oxopentanoate. This Wolinella succinogenes (strain ATCC 29543 / DSM 1740 / CCUG 13145 / JCM 31913 / LMG 7466 / NCTC 11488 / FDC 602W) (Vibrio succinogenes) protein is 3-isopropylmalate dehydrogenase.